We begin with the raw amino-acid sequence, 489 residues long: N-succinylglutamate 5-semialdehyde dehydrogenase 1 (489 aa).

Position 223–228 (223–228 (GSSRTG)) interacts with NAD(+). Residues Glu-246 and Cys-280 contribute to the active site.

The protein belongs to the aldehyde dehydrogenase family. AstD subfamily.

The enzyme catalyses N-succinyl-L-glutamate 5-semialdehyde + NAD(+) + H2O = N-succinyl-L-glutamate + NADH + 2 H(+). It participates in amino-acid degradation; L-arginine degradation via AST pathway; L-glutamate and succinate from L-arginine: step 4/5. In terms of biological role, catalyzes the NAD-dependent reduction of succinylglutamate semialdehyde into succinylglutamate. The sequence is that of N-succinylglutamate 5-semialdehyde dehydrogenase 1 from Pseudoalteromonas translucida (strain TAC 125).